The following is a 332-amino-acid chain: PTS-dependent dihydroxyacetone kinase, dihydroxyacetone-binding subunit DhaK (332 aa).

Residues 9-331 enclose the DhaK domain; it reads QPQDVVSEML…LNEDVKTISW (323 aa). Residues 55–58, lysine 106, and aspartate 111 each bind dihydroxyacetone; that span reads GSGH. Histidine 58 serves as the catalytic Proton acceptor. Catalysis depends on histidine 220, which acts as the Tele-hemiaminal-histidine intermediate.

Homodimer. The dihydroxyacetone kinase complex is composed of a homodimer of DhaM, a homodimer of DhaK and the subunit DhaL.

The enzyme catalyses dihydroxyacetone + phosphoenolpyruvate = dihydroxyacetone phosphate + pyruvate. It participates in polyol metabolism; glycerol degradation. Functionally, dihydroxyacetone binding subunit of the dihydroxyacetone kinase, which is responsible the phosphoenolpyruvate (PEP)-dependent phosphorylation of dihydroxyacetone via a phosphoryl group transfer from DhaL-ATP. The polypeptide is PTS-dependent dihydroxyacetone kinase, dihydroxyacetone-binding subunit DhaK (Lactococcus lactis subsp. lactis (strain IL1403) (Streptococcus lactis)).